The sequence spans 462 residues: Tubulin gamma-1 chain (462 aa).

142–148 provides a ligand contact to GTP; sequence AGGTGSG.

The protein belongs to the tubulin family.

The protein resides in the cytoplasm. It localises to the cytoskeleton. The protein localises to the microtubule organizing center. It is found in the centrosome. Its function is as follows. Tubulin is the major constituent of microtubules. The gamma chain is found at microtubule organizing centers (MTOC) such as the spindle poles or the centrosome, suggesting that it is involved in the minus-end nucleation of microtubule assembly. The sequence is that of Tubulin gamma-1 chain from Euplotes crassus.